The primary structure comprises 413 residues: Glucose-1-phosphate adenylyltransferase (413 aa).

Residues Y102, G167, 182–183 (EK), and S200 contribute to the alpha-D-glucose 1-phosphate site.

It belongs to the bacterial/plant glucose-1-phosphate adenylyltransferase family. As to quaternary structure, homotetramer.

It carries out the reaction alpha-D-glucose 1-phosphate + ATP + H(+) = ADP-alpha-D-glucose + diphosphate. The protein operates within glycan biosynthesis; glycogen biosynthesis. Involved in the biosynthesis of ADP-glucose, a building block required for the elongation reactions to produce glycogen. Catalyzes the reaction between ATP and alpha-D-glucose 1-phosphate (G1P) to produce pyrophosphate and ADP-Glc. The sequence is that of Glucose-1-phosphate adenylyltransferase from Deinococcus radiodurans (strain ATCC 13939 / DSM 20539 / JCM 16871 / CCUG 27074 / LMG 4051 / NBRC 15346 / NCIMB 9279 / VKM B-1422 / R1).